Here is a 2202-residue protein sequence, read N- to C-terminus: Nonribosomal peptide synthetase 5 (2202 aa).

The interval 58–443 (TYAQLDALSD…LLSYDKVDSA (386 aa)) is adenylation 1. In terms of domain architecture, Carrier 1 spans 517–593 (ERGLGAVESV…NIAAAVVELS (77 aa)). Ser-554 is subject to O-(pantetheine 4'-phosphoryl)serine. The segment at 625 to 918 (IAPMTDMQTR…INTLPLAINT (294 aa)) is condensation 1. Residues 1105 to 1482 (TYREFGRMTE…EVQSTISKLA (378 aa)) are adenylation 2. The region spanning 1563–1643 (DLETDTQRVL…DLSLAIDELV (81 aa)) is the Carrier 2 domain. Ser-1602 is subject to O-(pantetheine 4'-phosphoryl)serine. The interval 1664–1952 (GQLPLSYLEK…FLDRLLLRIQ (289 aa)) is condensation 2. A disordered region spans residues 2103-2129 (PVGLTPSHEGSAELTNGTNKTDSTTGQ). Residues 2115–2129 (ELTNGTNKTDSTTGQ) are compositionally biased toward polar residues. Residues 2130 to 2202 (QELENNLTDV…LELATCAVII (73 aa)) form the Carrier 3 domain. Ser-2164 is modified (O-(pantetheine 4'-phosphoryl)serine).

It belongs to the NRP synthetase family.

Its function is as follows. Nonribosomal peptide synthesis (NRPS) is a key mechanism responsible for the biosynthesis of bioactive metabolites which are potentially contributing to organismal virulence. The chain is Nonribosomal peptide synthetase 5 (NRPS5) from Aspergillus fumigatus (strain ATCC MYA-4609 / CBS 101355 / FGSC A1100 / Af293) (Neosartorya fumigata).